A 283-amino-acid polypeptide reads, in one-letter code: Bifunctional protein FolD (283 aa).

Residues Gly-157 to Gly-159 and Ile-224 contribute to the NADP(+) site.

It belongs to the tetrahydrofolate dehydrogenase/cyclohydrolase family. As to quaternary structure, homodimer.

The enzyme catalyses (6R)-5,10-methylene-5,6,7,8-tetrahydrofolate + NADP(+) = (6R)-5,10-methenyltetrahydrofolate + NADPH. It catalyses the reaction (6R)-5,10-methenyltetrahydrofolate + H2O = (6R)-10-formyltetrahydrofolate + H(+). Its pathway is one-carbon metabolism; tetrahydrofolate interconversion. In terms of biological role, catalyzes the oxidation of 5,10-methylenetetrahydrofolate to 5,10-methenyltetrahydrofolate and then the hydrolysis of 5,10-methenyltetrahydrofolate to 10-formyltetrahydrofolate. This chain is Bifunctional protein FolD, found in Mycoplasmoides gallisepticum (strain R(low / passage 15 / clone 2)) (Mycoplasma gallisepticum).